We begin with the raw amino-acid sequence, 405 residues long: Molybdopterin molybdenumtransferase 2 (405 aa).

The protein belongs to the MoeA family. Mg(2+) serves as cofactor.

It carries out the reaction adenylyl-molybdopterin + molybdate = Mo-molybdopterin + AMP + H(+). Its pathway is cofactor biosynthesis; molybdopterin biosynthesis. In terms of biological role, catalyzes the insertion of molybdate into adenylated molybdopterin with the concomitant release of AMP. In Mycobacterium tuberculosis (strain CDC 1551 / Oshkosh), this protein is Molybdopterin molybdenumtransferase 2 (moaE2).